The sequence spans 186 residues: CASP-like protein ARALYDRAFT_316979 (186 aa).

The Cytoplasmic segment spans residues 1 to 23 (MRRNGDGEEVVAKRRRRIKELVQ). The helical transmembrane segment at 24-44 (VALRGGCLAASATAMAVMLTA) threads the bilayer. At 45-70 (TEEGVADIYGFKLTLSSNWSFSPSYQ) the chain is on the extracellular side. N62 carries an N-linked (GlcNAc...) asparagine glycan. Residues 71-91 (YVVGACTGTVLYSLFQLCLGV) form a helical membrane-spanning segment. The Cytoplasmic portion of the chain corresponds to 92 to 115 (YRLLTGSPITPSRFQAWLCFTSDQ). Residues 116–132 (LFGYLMMSAGSAGSGVT) traverse the membrane as a helical segment. Over 133 to 161 (NLNKTGIRHTPLPDFCKTLSSFCNHVALS) the chain is Extracellular. An N-linked (GlcNAc...) asparagine glycan is attached at N135. The chain crosses the membrane as a helical span at residues 162 to 182 (LLLVFLSFIFLASSSFFTVLV). Over 183–186 (LSTP) the chain is Cytoplasmic.

It belongs to the Casparian strip membrane proteins (CASP) family. Homodimer and heterodimers.

The protein localises to the cell membrane. This chain is CASP-like protein ARALYDRAFT_316979, found in Arabidopsis lyrata subsp. lyrata (Lyre-leaved rock-cress).